The following is a 451-amino-acid chain: UDP-N-acetylmuramoylalanine--D-glutamate ligase (451 aa).

Residue 119-125 participates in ATP binding; that stretch reads GSNGKTT.

The protein belongs to the MurCDEF family.

Its subcellular location is the cytoplasm. The enzyme catalyses UDP-N-acetyl-alpha-D-muramoyl-L-alanine + D-glutamate + ATP = UDP-N-acetyl-alpha-D-muramoyl-L-alanyl-D-glutamate + ADP + phosphate + H(+). Its pathway is cell wall biogenesis; peptidoglycan biosynthesis. Cell wall formation. Catalyzes the addition of glutamate to the nucleotide precursor UDP-N-acetylmuramoyl-L-alanine (UMA). The polypeptide is UDP-N-acetylmuramoylalanine--D-glutamate ligase (Geobacillus sp. (strain WCH70)).